Consider the following 145-residue polypeptide: uncharacterized protein (145 aa).

Substrate contacts are provided by valine 97 and asparagine 121.

The protein belongs to the D-isomer specific 2-hydroxyacid dehydrogenase family. FDH subfamily.

This is an uncharacterized protein from Saccharomyces cerevisiae (strain ATCC 204508 / S288c) (Baker's yeast).